A 641-amino-acid chain; its full sequence is Tetracycline resistance protein TetQ (641 aa).

A tr-type G domain is found at 1–244; it reads MNIINLGILA…AITSFILPPA (244 aa). Residues 10–17, 74–78, and 128–131 each bind GTP; these read AHIDAGKT, DTPGH, and NKID.

The protein belongs to the TRAFAC class translation factor GTPase superfamily. Classic translation factor GTPase family. TetM/TetO subfamily.

Abolishes the inhibitory effect of tetracyclin on protein synthesis by a non-covalent modification of the ribosomes. The protein is Tetracycline resistance protein TetQ (tetQ) of Bacteroides thetaiotaomicron.